We begin with the raw amino-acid sequence, 42 residues long: Statherin (42 aa).

The tract at residues 1–6 (DSSEEK) is hydroxyapatite-binding; inhibits crystal growth. A phosphoserine mark is found at Ser-2 and Ser-3. Positions 18-42 (RYGPYQPFVPPPLYPQPYQPYQPQY) are disordered. The segment at 18-42 (RYGPYQPFVPPPLYPQPYQPYQPQY) is hydrophobic; inhibits precipitation of calcium phosphate salts. Residues 24–42 (PFVPPPLYPQPYQPYQPQY) are compositionally biased toward pro residues.

It belongs to the histatin/statherin family. As to expression, secreted by parotid and submandibular glands.

Its subcellular location is the secreted. Salivary protein that stabilizes saliva supersaturated with calcium salts by inhibiting the precipitation of calcium phosphate salts. It also modulates hydroxyapatite crystal formation on the tooth surface. The polypeptide is Statherin (STATH) (Macaca arctoides (Stump-tailed macaque)).